The sequence spans 354 residues: Ornithine cyclodeaminase (354 aa).

L-ornithine contacts are provided by Arg-53 and Lys-77. NAD(+) is bound by residues Thr-92, Arg-120, 147–148 (AQ), Asp-169, Thr-209, 232–235 (VGGD), Lys-239, and Ser-300. Position 120 (Arg-120) interacts with L-ornithine. Residue Asp-235 coordinates L-ornithine. Asp-235 acts as the Proton donor/acceptor in catalysis. L-ornithine is bound at residue Val-301.

It belongs to the ornithine cyclodeaminase/mu-crystallin family. NAD(+) serves as cofactor.

It carries out the reaction L-ornithine = L-proline + NH4(+). It functions in the pathway amino-acid biosynthesis; L-proline biosynthesis; L-proline from L-ornithine: step 1/1. With respect to regulation, is subject to substrate inhibition. Is regulated by L-arginine, which stimulates enzymatic activity at 0.1-1 mM while inhibits activity at higher concentrations, and has pronounced effects on the optima for pH and temperature and on the Km for L-ornithine. Is not inhibited by L-proline. Functionally, catalyzes the conversion of L-ornithine into L-proline with release of ammonia. Is involved in the utilization of nopaline, a catabolic pathway that proceeds through L-arginine and L-ornithine to L-proline. Nopaline is a predominant opine in plant cells transformed with Ti plasmid pTiC58. In Agrobacterium fabrum (strain C58 / ATCC 33970) (Agrobacterium tumefaciens (strain C58)), this protein is Ornithine cyclodeaminase.